We begin with the raw amino-acid sequence, 790 residues long: Protein SEY1 (790 aa).

Residues 1–692 (MELSEGELSH…KRSIVQHITQ (692 aa)) lie on the Cytoplasmic side of the membrane. The GB1/RHD3-type G domain occupies 55–284 (GNNYHIISVF…VSNELFKPEY (230 aa)). A GTP-binding site is contributed by 65-72 (GSQSTGKS). The chain crosses the membrane as a helical span at residues 693–713 (IPYYIYLIILVLGWNEFMAII). Topologically, residues 714 to 716 (RNP) are lumenal. A helical transmembrane segment spans residues 717 to 737 (LFFSLSIVLGATVYVLYYLGL). Residues 738–790 (LRPALVVAQRTMDEVIVMAKTKLREVLIDDHEVTGRQLNKMAGSKENIELDDM) lie on the Cytoplasmic side of the membrane.

It belongs to the TRAFAC class dynamin-like GTPase superfamily. GB1/RHD3 GTPase family. RHD3 subfamily.

It localises to the endoplasmic reticulum membrane. Cooperates with the reticulon proteins and tubule-shaping DP1 family proteins to generate and maintain the structure of the tubular endoplasmic reticulum network. Has GTPase activity, which is required for its function in ER organization. Required for virulence and resistance to cycloheximide. In Candida albicans (strain SC5314 / ATCC MYA-2876) (Yeast), this protein is Protein SEY1.